We begin with the raw amino-acid sequence, 417 residues long: Odorant receptor Or1 (417 aa).

The Cytoplasmic segment spans residues 1-2 (MK). A helical transmembrane segment spans residues 3-23 (LNKLNPRWDAYDRRDSFWLQL). Over 24–45 (LCLKYLGLWPPEDTDQATRNRY) the chain is Extracellular. Residues 46 to 66 (IAYGWALRIMFLHLYALTQAL) traverse the membrane as a helical segment. The Cytoplasmic portion of the chain corresponds to 67–73 (YFKDVKD). The helical transmembrane segment at 74-94 (INDIANALFVLMTQVTLIYKL) threads the bilayer. Residues 95 to 133 (EKFNYNIARIQACLRKLNCTLYHPKQREEFSPVLQSMSG) are Extracellular-facing. The N-linked (GlcNAc...) asparagine glycan is linked to N112. A helical membrane pass occupies residues 134-154 (VFWLMIFLMFVAIFTIIMWVM). Residues 155-178 (SPAFDNERRLPVPAWFPVDYHHSD) lie on the Cytoplasmic side of the membrane. A helical transmembrane segment spans residues 179-199 (IVYGVLFLYQTIGIVMSATYN). Over 200–284 (FSTDTMFSGL…ILSFGDEVQD (85 aa)) the chain is Extracellular. A helical transmembrane segment spans residues 285 to 305 (IFQGSIFAQVCASVIIICMTL). The Cytoplasmic segment spans residues 306-317 (LQATGDDVTMAD). A helical transmembrane segment spans residues 318–338 (LLGCGFYLLVMTSQVFIFCYV). The Extracellular portion of the chain corresponds to 339–417 (GNEISYTTDK…LAVLQSMESE (79 aa)).

Belongs to the insect chemoreceptor superfamily. Heteromeric odorant receptor channel (TC 1.A.69) family. Or2a subfamily. As to expression, female-specific antennae and maxillary palp expression.

The protein localises to the cell membrane. Functionally, odorant receptor which plays a critical role in the anthropophilic host-seeking behavior; establishes the host preference to transmit malaria. May participate in the phenomenon of decreased host-seeking behavior in disease vector mosquitoes after blood feeding. The polypeptide is Odorant receptor Or1 (OR1) (Anopheles gambiae (African malaria mosquito)).